The primary structure comprises 1433 residues: Probable ATP-dependent RNA helicase spindle-E (1433 aa).

One can recognise a Helicase ATP-binding domain in the interval 126–294 (INAINENPVV…FANERSAPPV (169 aa)). 139 to 146 (GETGCGKT) serves as a coordination point for ATP. The DEAH box signature appears at 240–243 (DEVH). Residues 355–526 (TGKSYNQSLR…NCVLKAKELK (172 aa)) enclose the Helicase C-terminal domain. Residues 935-998 (AGAITKGLML…RLMSQDLLRH (64 aa)) enclose the Tudor domain.

This sequence belongs to the DEAD box helicase family. DEAH subfamily.

Its subcellular location is the cytoplasm. The enzyme catalyses ATP + H2O = ADP + phosphate + H(+). Its function is as follows. Probable ATP-binding RNA helicase which plays a central role during spermatogenesis and oogenesis by repressing transposable elements and preventing their mobilization, which is essential for the germline integrity. Acts via the piRNA metabolic process, which mediates the repression of transposable elements during meiosis by forming complexes composed of piRNAs and Piwi and govern the methylation and subsequent repression of transposons. Involved in the repression of LTR retrotransposon copia. Also involved in telomere regulation by repressing specialized telomeric retroelements HeT-A, TAHRE, and TART; Drosophila telomeres being maintained by transposition of specialized telomeric retroelements. Involved in telomeric trans-silencing, a repression mechanism by which a transposon or a transgene inserted in subtelomeric heterochromatin has the capacity to repress in trans in the female germline, a homologous transposon, or transgene located in euchromatin. Involved in the repression of testis-expressed Stellate genes by the homologous Su(Ste) repeats. Required for anteroposterior and dorsoventral axis formation during oogenesis. The chain is Probable ATP-dependent RNA helicase spindle-E (spn-E) from Drosophila pseudoobscura pseudoobscura (Fruit fly).